Here is a 264-residue protein sequence, read N- to C-terminus: 3-methyl-2-oxobutanoate hydroxymethyltransferase (264 aa).

The Mg(2+) site is built by Asp45 and Asp84. 3-methyl-2-oxobutanoate-binding positions include 45-46 (DS), Asp84, and Lys112. Glu114 contributes to the Mg(2+) binding site. The Proton acceptor role is filled by Glu181.

The protein belongs to the PanB family. In terms of assembly, homodecamer; pentamer of dimers. Mg(2+) is required as a cofactor.

Its subcellular location is the cytoplasm. The catalysed reaction is 3-methyl-2-oxobutanoate + (6R)-5,10-methylene-5,6,7,8-tetrahydrofolate + H2O = 2-dehydropantoate + (6S)-5,6,7,8-tetrahydrofolate. Its pathway is cofactor biosynthesis; (R)-pantothenate biosynthesis; (R)-pantoate from 3-methyl-2-oxobutanoate: step 1/2. In terms of biological role, catalyzes the reversible reaction in which hydroxymethyl group from 5,10-methylenetetrahydrofolate is transferred onto alpha-ketoisovalerate to form ketopantoate. The protein is 3-methyl-2-oxobutanoate hydroxymethyltransferase of Erwinia tasmaniensis (strain DSM 17950 / CFBP 7177 / CIP 109463 / NCPPB 4357 / Et1/99).